Consider the following 428-residue polypeptide: MVNNIMHEYVPPSQRLFHSRHRITRNDLKEEALHSGTTDWTTILDTTIDKDTNLISYAVPIIDNFAIPRANSQGSPVAPSPNHRSTMYSSSSSSASSVFSDGLFTPNNNRNSSGSSSLVIRPQKNLSVDSLIQENKRKINSEKESLSLIANNNDETLCTHTDPSIQNLIKSETKRNILNLKFQNRNLFRRELKLEKFWSNLRSCHTSGDETDLLLVISKHNLYWFGIPNDFRLPIYKRCLYHYSELDEAGFFSQYANNSLYLAIRKCCNNEEQETLSRSIFINLTKNVTWLNSRFDDNKDNKNSYTVTEGKFYQDFPNLYYHLKDKLKLNVIMDFIKPVIRNFMTNALNKHKLDGIGLELLDILIVTTYYGPNKINAFLMDTFILNLLKQCHYKFFVSNISELVIQISKIDCDLVILLEDLRSRIDLD.

Residues 72-91 are disordered; it reads SQGSPVAPSPNHRSTMYSSS. Position 127 is a phosphoserine (Ser-127).

This is an uncharacterized protein from Saccharomyces cerevisiae (strain ATCC 204508 / S288c) (Baker's yeast).